The chain runs to 184 residues: Large ribosomal subunit protein uL5 (184 aa).

The protein belongs to the universal ribosomal protein uL5 family. Part of the 50S ribosomal subunit; part of the 5S rRNA/L5/L18/L25 subcomplex. Contacts the 5S rRNA and the P site tRNA. Forms a bridge to the 30S subunit in the 70S ribosome.

Functionally, this is one of the proteins that bind and probably mediate the attachment of the 5S RNA into the large ribosomal subunit, where it forms part of the central protuberance. In the 70S ribosome it contacts protein S13 of the 30S subunit (bridge B1b), connecting the 2 subunits; this bridge is implicated in subunit movement. Contacts the P site tRNA; the 5S rRNA and some of its associated proteins might help stabilize positioning of ribosome-bound tRNAs. This chain is Large ribosomal subunit protein uL5, found in Corynebacterium kroppenstedtii (strain DSM 44385 / JCM 11950 / CIP 105744 / CCUG 35717).